The sequence spans 334 residues: WD repeat-containing protein 54 (334 aa).

3 WD repeats span residues 162–206, 208–247, and 250–289; these read GHQM…TLLT, IPGF…LHVQ, and AHAR…ESGY.

In terms of assembly, homodimer and homotrimer; forms tight forms of dimers and trimers. Interacts with IZUMO1 and IZUMO1R/JUNO. In terms of processing, cross-linked to tightly form both dimers and trimers by TGM2. Cross-linking enhances the activation of EGF receptor-mediated signaling pathway. Cross-linking is inhibited by EGF. Post-translationally, ubiquitinated. EGF increases ubiquitination. As to expression, expressed in epithelial cells (at protein level). Isoform 3 expression is highly increased in colorectal cancer cells.

It is found in the vesicle. Its subcellular location is the cytoplasm. It localises to the cell membrane. In terms of biological role, plays a role in the adhesion and fusion of the sperm-oocyte membrane through its interactions with IZUMO1 and IZUMO1R/JUNO. When cross-linked to form dimers and trimers, it has a regulatory effect on ERK signaling pathway activity in response to EGF stimulation. Colocalizes with the EGF receptor in WDR54-specific vesicle where it sustains the internalization and controls the degradation of the EGF receptor after EGF stimulation. This chain is WD repeat-containing protein 54, found in Homo sapiens (Human).